A 262-amino-acid polypeptide reads, in one-letter code: Dihydroorotate dehydrogenase B (NAD(+)), electron transfer subunit (262 aa).

The FAD-binding FR-type domain occupies 3–104 (QLQEMMTVVS…MGPLGNGFPV (102 aa)). FAD is bound by residues 53–56 (RPIS), 70–72 (LYR), and 79–80 (GT). Cys-226, Cys-231, Cys-234, and Cys-249 together coordinate [2Fe-2S] cluster.

The protein belongs to the PyrK family. As to quaternary structure, heterotetramer of 2 PyrK and 2 PyrD type B subunits. It depends on [2Fe-2S] cluster as a cofactor. Requires FAD as cofactor.

It functions in the pathway pyrimidine metabolism; UMP biosynthesis via de novo pathway; orotate from (S)-dihydroorotate (NAD(+) route): step 1/1. Its function is as follows. Responsible for channeling the electrons from the oxidation of dihydroorotate from the FMN redox center in the PyrD type B subunit to the ultimate electron acceptor NAD(+). The polypeptide is Dihydroorotate dehydrogenase B (NAD(+)), electron transfer subunit (Lactococcus lactis subsp. cremoris (strain SK11)).